Consider the following 247-residue polypeptide: Cationic trypsin-3 (247 aa).

A signal peptide spans 1 to 15 (MKALIFLAFLGAAVA). A propeptide spans 16–24 (LPLDDDDDK) (activation peptide). The region spanning 25 to 245 (IVGGYTCQKN…YVNWIQQTVA (221 aa)) is the Peptidase S1 domain. Cystine bridges form between Cys-31-Cys-161, Cys-49-Cys-65, Cys-133-Cys-234, Cys-140-Cys-207, Cys-172-Cys-186, and Cys-197-Cys-221. Catalysis depends on His-64, which acts as the Charge relay system. Residues Glu-76, Asn-78, Val-81, and Glu-86 each contribute to the Ca(2+) site. Asp-108 functions as the Charge relay system in the catalytic mechanism. The active-site Charge relay system is Ser-201.

It belongs to the peptidase S1 family. It depends on Ca(2+) as a cofactor.

Its subcellular location is the secreted. The protein resides in the extracellular space. It catalyses the reaction Preferential cleavage: Arg-|-Xaa, Lys-|-Xaa.. In Rattus norvegicus (Rat), this protein is Cationic trypsin-3 (Try3).